Consider the following 200-residue polypeptide: Mediator of RNA polymerase II transcription subunit 29 (200 aa).

Composition is skewed to low complexity over residues 1–20 (MAAS…VSGP) and 36–48 (AQLV…GLLQ). Residues 1 to 48 (MAASQQQASATTSTASVSGPGSAGGSGPQQQPQPPAQLVGPAQSGLLQ) are disordered. Ala2 bears the N-acetylalanine mark.

Belongs to the Mediator complex subunit 29 family. In terms of assembly, component of the TRAP/SMCC mediator complex. Interacts with MED20/TRFP. Associates with the MED18-MED20 heteromer.

Its subcellular location is the nucleus. Functionally, component of the mediator complex, a complex that can either repress or activate transcription. Mediator complexes are essential for basal and regulated expression of nearly all RNA polymerase II-dependent genes. They may act as a bridge, conveying regulatory information from enhancers and other control elements to the promoter. This chain is Mediator of RNA polymerase II transcription subunit 29 (MED29), found in Bos taurus (Bovine).